We begin with the raw amino-acid sequence, 1175 residues long: Atrophin-1 (1175 aa).

3 disordered regions span residues 1-595 (MKTR…VTTS), 608-752 (SSPA…ARFN), and 770-847 (VPLE…HRPP). The Nuclear localization signal motif lies at 16–32 (RKKEAPGPREELRSRGR). Residues 17-29 (KKEAPGPREELRS) are compositionally biased toward basic and acidic residues. At Ser34 the chain carries Phosphoserine. Basic and acidic residues predominate over residues 45 to 63 (GKAEKSRQTAKKARIEEPS). Phosphoserine occurs at positions 77, 79, 101, 103, and 107. The span at 108–128 (LDGRSINDDGSSDPRDIDQDN) shows a compositional bias: basic and acidic residues. The segment covering 129-152 (RSTSPSIYSPGSVENDSDSSSGLS) has biased composition (polar residues). Pro residues-rich tracts occupy residues 158-174 (PYHP…PPDS) and 208-217 (GPPPGAPPTH). Low complexity-rich tracts occupy residues 240 to 253 (GAAA…SGGK) and 262 to 273 (IPISSSGASGAP). Pro residues predominate over residues 345–374 (PPGPEKGPTLAPSPHPLPPASSSAPGPPMR). A compositionally biased stretch (low complexity) spans 378–396 (SSSSSSAAASSSSSSSSAS). Positions 416–437 (SMSVSNQPPKYTQPSLPSQAVW) are enriched in polar residues. The segment covering 476 to 491 (THHHHQQQPQQQHHHG) has biased composition (basic residues). Residues 503–553 (HPLESSNSHHAHPYNMSPSLGSLRPYPPGPAHLPPPHGQVSYNQAGPNGPP) form an involved in binding BAIAP2 region. The segment covering 527 to 539 (PYPPGPAHLPPPH) has biased composition (pro residues). Positions 547–584 (AGPNGPPVSSSNSSGSSSQASYSCSHPSSSQGPQGASY) are enriched in low complexity. Ser617 is modified (phosphoserine). Residue Lys626 is modified to N6-acetyllysine. Thr638 carries the phosphothreonine modification. Ser646 carries the post-translational modification Phosphoserine. At Thr654 the chain carries Phosphothreonine. Composition is skewed to pro residues over residues 693-703 (LPPPPAAPTTG) and 722-737 (PESP…PPPK). Phosphoserine; by MAPK8 is present on Ser724. A phosphoserine mark is found at Ser731 and Ser733. Basic and acidic residues predominate over residues 780–824 (KRADLVEKVRREAEQRAREEKEREREREREKEREREKERELERSV). Residues 864–879 (DTPALRTLSEYARPHV) are required for interaction with FAT1. The residue at position 881 (Ser881) is a Phosphoserine. The segment at 913–932 (PAAREREREARERDLRDRLK) is disordered. Basic and acidic residues predominate over residues 914 to 932 (AAREREREARERDLRDRLK). Residues 1018 to 1026 (ALGNDPLAR) carry the Nuclear export signal motif. The residue at position 1100 (Arg1100) is an Asymmetric dimethylarginine. Lys1168 is covalently cross-linked (Glycyl lysine isopeptide (Lys-Gly) (interchain with G-Cter in SUMO2)).

In terms of assembly, interacts with BAIAP2, WWP1, WWP2, WWP3 and RERE. Interacts (via its N-terminus) with MTG8; the interaction enhances transcriptional repression of MTG8. Interacts with PQBP1. Interacts with NR2E1; the interaction represses the transcriptional activity of NR2E1. Interacts with FAT1 (via a C-terminal domain). Phosphorylated in vitro by MAPK8/JNK1 on Ser-724. As to expression, widely expressed. Most abundant in the brain.

The protein localises to the cytoplasm. It is found in the perinuclear region. Its subcellular location is the cell junction. The protein resides in the nucleus. Its function is as follows. Transcriptional corepressor. Corepressor of MTG8 transcriptional repression. Has some intrinsic repression activity which is independent of the number of the poly-Q repeats. Recruits NR2E1 to repress transcription. Promotes vascular smooth cell (VSMC) migration and orientation. This chain is Atrophin-1 (Atn1), found in Mus musculus (Mouse).